A 611-amino-acid polypeptide reads, in one-letter code: UvrABC system protein C (611 aa).

The 78-residue stretch at 14–91 (TSPGCYIHKD…IKENQPKYNI (78 aa)) folds into the GIY-YIG domain. The UVR domain occupies 196–231 (DQIIEDLRGKMAGAAQAMEFEKAAEYRDLIQSIGTL). Residues 587–611 (KLNPKTQEQEQAQLREVAEPQIGLE) form a disordered region.

This sequence belongs to the UvrC family. Interacts with UvrB in an incision complex.

The protein resides in the cytoplasm. Functionally, the UvrABC repair system catalyzes the recognition and processing of DNA lesions. UvrC both incises the 5' and 3' sides of the lesion. The N-terminal half is responsible for the 3' incision and the C-terminal half is responsible for the 5' incision. This Streptococcus sanguinis (strain SK36) protein is UvrABC system protein C.